A 449-amino-acid chain; its full sequence is Phosphoglucosamine mutase (449 aa).

S102 acts as the Phosphoserine intermediate in catalysis. Residues S102, D241, D243, and D245 each contribute to the Mg(2+) site. At S102 the chain carries Phosphoserine.

Belongs to the phosphohexose mutase family. Mg(2+) is required as a cofactor. Post-translationally, activated by phosphorylation.

The catalysed reaction is alpha-D-glucosamine 1-phosphate = D-glucosamine 6-phosphate. Functionally, catalyzes the conversion of glucosamine-6-phosphate to glucosamine-1-phosphate. In Roseobacter denitrificans (strain ATCC 33942 / OCh 114) (Erythrobacter sp. (strain OCh 114)), this protein is Phosphoglucosamine mutase.